The following is a 242-amino-acid chain: Large ribosomal subunit protein uL30x (242 aa).

The protein belongs to the universal ribosomal protein uL30 family.

The sequence is that of Large ribosomal subunit protein uL30x (RPL7C) from Arabidopsis thaliana (Mouse-ear cress).